Reading from the N-terminus, the 120-residue chain is Myohemerythrin (120 aa).

The Fe cation site is built by H26, H56, E60, H75, H79, H108, and D113.

Belongs to the hemerythrin family.

In terms of biological role, myohemerythrin is an oxygen-binding protein found in the retractor muscles of certain worms. The oxygen-binding site contains two iron atoms. The sequence is that of Myohemerythrin from Riftia pachyptila (Vent tube worm).